The chain runs to 259 residues: Global transcriptional regulator CodY (259 aa).

Residues 1 to 155 (MDLLSKTRRI…GATVVGMEIL (155 aa)) form a GAF domain region. A DNA-binding region (H-T-H motif) is located at residues 203-222 (ASKIADRVGITRSVIVNALR).

It belongs to the CodY family.

The protein localises to the cytoplasm. Its function is as follows. DNA-binding global transcriptional regulator which is involved in the adaptive response to starvation and acts by directly or indirectly controlling the expression of numerous genes in response to nutrient availability. During rapid exponential growth, CodY is highly active and represses genes whose products allow adaptation to nutrient depletion. The protein is Global transcriptional regulator CodY of Brevibacillus brevis (strain 47 / JCM 6285 / NBRC 100599).